A 100-amino-acid polypeptide reads, in one-letter code: MSRGKHKPTITTERWRFFVEGKVQGVGFRQGCCRRAMDLGLSGWVRNLPDGRVEVQAEGTPMALSELRLWCERGPADARVSQVRPSQLPITGADWFEIRS.

In terms of domain architecture, Acylphosphatase-like spans 14-100 (RWRFFVEGKV…TGADWFEIRS (87 aa)). Catalysis depends on residues Arg29 and Asn47.

It belongs to the acylphosphatase family.

It catalyses the reaction an acyl phosphate + H2O = a carboxylate + phosphate + H(+). The chain is Acylphosphatase (acyP) from Synechococcus sp. (strain WH7803).